The sequence spans 229 residues: Putative ABC transporter permease protein ORF1 (229 aa).

One can recognise an ABC transmembrane type-1 domain in the interval 23-214 (ALNSLLVALA…LPSLAFFALV (192 aa)). 5 helical membrane passes run 27–47 (LLVALATAAVTVLIATPMAYV), 62–82 (WVVVSQAFPFVLLIIPLFLVL), 91–111 (LTGLVLVYVVWSLPFALWMLA), 150–170 (ATALFAFVTAWNEFFFALVLL), and 194–214 (SPAGAAAFLATLPSLAFFALV).

The protein belongs to the binding-protein-dependent transport system permease family. MalFG subfamily.

The protein resides in the cell membrane. Its function is as follows. May participate in oleandomycin secretion during antibiotic production. The chain is Putative ABC transporter permease protein ORF1 from Streptomyces antibioticus.